The sequence spans 100 residues: Urease subunit gamma (100 aa).

The protein belongs to the urease gamma subunit family. In terms of assembly, heterotrimer of UreA (gamma), UreB (beta) and UreC (alpha) subunits. Three heterotrimers associate to form the active enzyme.

It is found in the cytoplasm. It catalyses the reaction urea + 2 H2O + H(+) = hydrogencarbonate + 2 NH4(+). Its pathway is nitrogen metabolism; urea degradation; CO(2) and NH(3) from urea (urease route): step 1/1. In Cyanothece sp. (strain PCC 7425 / ATCC 29141), this protein is Urease subunit gamma.